The primary structure comprises 184 residues: MAQRLKTFYLNSVVPKLRQQFHHRNIHEVPSIKKIVINRGLGDASQNAKLLDGSLQELTTIAGQRGVITRSKQAIAAFKIRQDMPVGISVTLRGERMYAFLDRLINLALPRIRDFQGMSTKSFDGQGNYSLGLNEQLMFPEINYDAIDQMRGMDISIITSATEDREGFALLQALGMPFRTATID.

This sequence belongs to the universal ribosomal protein uL5 family. As to quaternary structure, part of the 50S ribosomal subunit; contacts the 5S rRNA.

The protein resides in the plastid. The protein localises to the chloroplast. In terms of biological role, binds 5S rRNA, forms part of the central protuberance of the 50S subunit. This is Large ribosomal subunit protein uL5c (rpl5) from Nephroselmis olivacea (Green alga).